Reading from the N-terminus, the 133-residue chain is Small ribosomal subunit protein uS8 (133 aa).

The protein belongs to the universal ribosomal protein uS8 family. In terms of assembly, part of the 30S ribosomal subunit. Contacts proteins S5 and S12.

One of the primary rRNA binding proteins, it binds directly to 16S rRNA central domain where it helps coordinate assembly of the platform of the 30S subunit. The chain is Small ribosomal subunit protein uS8 from Syntrophus aciditrophicus (strain SB).